The primary structure comprises 412 residues: Protein Mb3436c (412 aa).

At K227 the chain carries N6-(pyridoxal phosphate)lysine.

The protein belongs to the DegT/DnrJ/EryC1 family.

In Mycobacterium bovis (strain ATCC BAA-935 / AF2122/97), this protein is Protein Mb3436c.